The chain runs to 109 residues: Small ribosomal subunit protein uS17A (109 aa).

Belongs to the universal ribosomal protein uS17 family. In terms of assembly, part of the 30S ribosomal subunit.

In terms of biological role, one of the primary rRNA binding proteins, it binds specifically to the 5'-end of 16S ribosomal RNA. The sequence is that of Small ribosomal subunit protein uS17A from Methanosarcina acetivorans (strain ATCC 35395 / DSM 2834 / JCM 12185 / C2A).